Reading from the N-terminus, the 266-residue chain is Undecaprenyl-diphosphatase (266 aa).

The next 8 helical transmembrane spans lie at 1 to 21 (MDTF…FLPI), 39 to 59 (QGLS…VMYF), 87 to 107 (WWII…KGFI), 111 to 131 (FRSI…LWWA), 144 to 164 (VGWK…IPGT), 183 to 203 (AAAR…AILV), 218 to 238 (ALGL…HYFL), and 246 to 266 (MTPF…FIFL).

It belongs to the UppP family.

Its subcellular location is the cell inner membrane. The enzyme catalyses di-trans,octa-cis-undecaprenyl diphosphate + H2O = di-trans,octa-cis-undecaprenyl phosphate + phosphate + H(+). Functionally, catalyzes the dephosphorylation of undecaprenyl diphosphate (UPP). Confers resistance to bacitracin. The polypeptide is Undecaprenyl-diphosphatase (Shewanella halifaxensis (strain HAW-EB4)).